A 788-amino-acid chain; its full sequence is Cap-specific mRNA (nucleoside-2'-O-)-methyltransferase 1 (788 aa).

The region spanning tyrosine 25 to aspartate 71 is the G-patch domain. Substrate is bound by residues lysine 143–aspartate 147 and arginine 158. A RrmJ-type SAM-dependent 2'-O-MTase domain is found at isoleucine 171 to arginine 384. Residue asparagine 174 coordinates S-adenosyl-L-methionine. Lysine 179 is a catalytic residue. Cysteine 215–phenylalanine 221 serves as a coordination point for S-adenosyl-L-methionine. Aspartate 298 is an active-site residue. Asparagine 308 to glutamine 310 contributes to the substrate binding site. Lysine 338 (proton acceptor) is an active-site residue. Asparagine 373 is a binding site for substrate.

In terms of assembly, interacts (via C-terminus) with r2d2 (via C-terminus).

It is found in the nucleus. The protein localises to the cytoplasm. The enzyme catalyses a 5'-end (N(7)-methyl 5'-triphosphoguanosine)-ribonucleoside in mRNA + S-adenosyl-L-methionine = a 5'-end (N(7)-methyl 5'-triphosphoguanosine)-(2'-O-methyl-ribonucleoside) in mRNA + S-adenosyl-L-homocysteine + H(+). Its function is as follows. S-adenosyl-L-methionine-dependent methyltransferase that mediates mRNA cap1 2'-O-ribose methylation to the 5'-cap structure of mRNAs. Methylates the ribose of the first nucleotide of a m(7)GpppG-capped mRNA to produce m(7)GpppNmp (cap1). Positively regulates the Ago2-dependent small RNA pathway, with roles in both siRNA biogenesis and RISC assembly. Involved in facilitating conversion of pre-RISC into holo-RISC, possibly by promoting the unwinding of Ago2-bound siRNA duplexes and thus the retention of the guide strand in holo-RISC. The protein is Cap-specific mRNA (nucleoside-2'-O-)-methyltransferase 1 of Drosophila melanogaster (Fruit fly).